A 515-amino-acid polypeptide reads, in one-letter code: Tetratricopeptide repeat protein 8 (515 aa).

One copy of the TPR 1 repeat lies at 4–37; it reads EMEPLLRAWSYFRRRKFQLCADLCTQMLEKSPYD. Disordered regions lie at residues 89–109 and 118–137; these read RPGT…TQAV and PITG…TMEQ. 7 TPR repeats span residues 225–258, 259–291, 292–325, 326–359, 360–393, 397–430, and 432–464; these read WWWK…QEMV, DTFL…FPGE, VTLL…DNTH, VEAI…GVYN, CQLF…AENE, ADVW…NNHH, and EAYN…APHM.

Part of BBSome complex, that contains BBS1, BBS2, BBS4, BBS5, BBS7, BBS8/TTC8, BBS9 and BBIP10. Interacts with PCM1. Interacts with CCDC28B. Interacts with PKD1. In terms of tissue distribution, isoform 1 is retina-specific whereas isoform 2 is ubiquitously expressed.

Its subcellular location is the cytoplasm. The protein resides in the cytoskeleton. It is found in the microtubule organizing center. The protein localises to the centrosome. It localises to the centriole. Its subcellular location is the cell projection. The protein resides in the cilium membrane. It is found in the centriolar satellite. The protein localises to the cilium. In terms of biological role, the BBSome complex is thought to function as a coat complex required for sorting of specific membrane proteins to the primary cilia. The BBSome complex is required for ciliogenesis but is dispensable for centriolar satellite function. This ciliogenic function is mediated in part by the Rab8 GDP/GTP exchange factor, which localizes to the basal body and contacts the BBSome. Rab8(GTP) enters the primary cilium and promotes extension of the ciliary membrane. Firstly the BBSome associates with the ciliary membrane and binds to RAB3IP/Rabin8, the guanosyl exchange factor (GEF) for Rab8 and then the Rab8-GTP localizes to the cilium and promotes docking and fusion of carrier vesicles to the base of the ciliary membrane. The BBSome complex, together with the LTZL1, controls SMO ciliary trafficking and contributes to the sonic hedgehog (SHH) pathway regulation. Required for proper BBSome complex assembly and its ciliary localization. The protein is Tetratricopeptide repeat protein 8 (Ttc8) of Mus musculus (Mouse).